A 464-amino-acid polypeptide reads, in one-letter code: Protein btn-1 (464 aa).

Residues M1–A22 form the signal peptide. 10 consecutive transmembrane segments (helical) span residues A38–L58, V73–I93, I102–S122, L129–L149, G167–V187, S190–P210, S288–N308, P332–I352, I354–H374, and L376–L396.

The protein belongs to the battenin family.

It localises to the vacuole membrane. Involved in vacuolar transport and vacuole pH homeostasis. Also required for cytokinesis. The chain is Protein btn-1 (cln3) from Neurospora crassa (strain ATCC 24698 / 74-OR23-1A / CBS 708.71 / DSM 1257 / FGSC 987).